Reading from the N-terminus, the 30-residue chain is Cycloviolacin-O1 (30 aa).

The cyclopeptide (Gly-Asn) cross-link spans 1-30 (GIPCAESCVYIPCTVTALLGCSCSNRVCYN). 3 cysteine pairs are disulfide-bonded: Cys4–Cys21, Cys8–Cys23, and Cys13–Cys28.

This is a cyclic peptide. Expressed in leaves, petals, petioles and roots but not in runners (at protein level).

Functionally, probably participates in a plant defense mechanism. In Viola odorata (Sweet violet), this protein is Cycloviolacin-O1.